Reading from the N-terminus, the 434-residue chain is Alpha-enolase (434 aa).

Serine 2 is modified (N-acetylserine). Lysine 5 carries the N6-acetyllysine modification. Serine 40 contacts Mg(2+). Position 44 is a phosphotyrosine (tyrosine 44). Lysine 60 carries the N6-acetyllysine; alternate modification. An N6-succinyllysine; alternate modification is found at lysine 60. Residues lysine 64 and lysine 71 each carry the N6-acetyllysine modification. Lysine 89 carries the N6-acetyllysine; alternate modification. Residue lysine 89 is modified to N6-succinyllysine; alternate. Lysine 92 and lysine 126 each carry N6-acetyllysine. Histidine 158 and glutamate 167 together coordinate substrate. N6-acetyllysine occurs at positions 193 and 199. An N6-acetyllysine; alternate modification is found at lysine 202. A Glycyl lysine isopeptide (Lys-Gly) (interchain with G-Cter in SUMO2); alternate cross-link involves residue lysine 202. Residue glutamate 210 is the Proton donor of the active site. N6-acetyllysine; alternate occurs at positions 228 and 233. At lysine 228 the chain carries N6-succinyllysine; alternate. N6-(2-hydroxyisobutyryl)lysine; alternate is present on lysine 228. The residue at position 233 (lysine 233) is an N6-malonyllysine; alternate. Aspartate 245 lines the Mg(2+) pocket. At serine 254 the chain carries Phosphoserine. Lysine 256 is modified (N6-acetyllysine). Serine 263 bears the Phosphoserine mark. Lysine 281 carries the N6-acetyllysine; alternate modification. The residue at position 281 (lysine 281) is an N6-(2-hydroxyisobutyryl)lysine; alternate. Tyrosine 287 is modified (phosphotyrosine). At serine 291 the chain carries Phosphoserine. Positions 293 and 318 each coordinate Mg(2+). Residues glutamate 293 and aspartate 318 each contribute to the substrate site. An N6-acetyllysine mark is found at lysine 335 and lysine 343. The active-site Proton acceptor is lysine 343. Residues 370-373 and lysine 394 contribute to the substrate site; that span reads SHRS. Positions 405–434 are required for interaction with PLG; that stretch reads AKYNQILRIEEELGSKAKFAGRSFRNPLAK. Lysine 406 is subject to N6-acetyllysine. N6-acetyllysine; alternate is present on lysine 420. Lysine 420 bears the N6-succinyllysine; alternate mark. Lysine 420 carries the N6-malonyllysine; alternate modification.

Belongs to the enolase family. Mammalian enolase is composed of 3 isozyme subunits, alpha, beta and gamma, which can form homodimers or heterodimers which are cell-type and development-specific. ENO1 interacts with PLG in the neuronal plasma membrane and promotes its activation. The C-terminal lysine is required for this binding. Interacts with ENO4 and PGAM2. Interacts with CMTM6. Requires Mg(2+) as cofactor. Post-translationally, ISGylated. Lysine 2-hydroxyisobutyrylation (Khib) by p300/EP300 activates the phosphopyruvate hydratase activity. The alpha/alpha homodimer is expressed in embryo and in most adult tissues. The alpha/beta heterodimer and the beta/beta homodimer are found in striated muscle, and the alpha/gamma heterodimer and the gamma/gamma homodimer in neurons.

It localises to the cytoplasm. Its subcellular location is the cell membrane. The catalysed reaction is (2R)-2-phosphoglycerate = phosphoenolpyruvate + H2O. The protein operates within carbohydrate degradation; glycolysis; pyruvate from D-glyceraldehyde 3-phosphate: step 4/5. Its function is as follows. Glycolytic enzyme the catalyzes the conversion of 2-phosphoglycerate to phosphoenolpyruvate. In addition to glycolysis, involved in various processes such as growth control, hypoxia tolerance and allergic responses. May also function in the intravascular and pericellular fibrinolytic system due to its ability to serve as a receptor and activator of plasminogen on the cell surface of several cell-types such as leukocytes and neurons. Stimulates immunoglobulin production. The protein is Alpha-enolase (ENO1) of Bos taurus (Bovine).